Reading from the N-terminus, the 469-residue chain is Glutamate--tRNA ligase (469 aa).

The 'HIGH' region motif lies at 9-19; the sequence is PSPTGFLHVGG. 4 residues coordinate Zn(2+): Cys98, Cys100, Cys125, and Asp127. The short motif at 236–240 is the 'KMSKS' region element; it reads KLSKR. Lys239 provides a ligand contact to ATP.

This sequence belongs to the class-I aminoacyl-tRNA synthetase family. Glutamate--tRNA ligase type 1 subfamily. As to quaternary structure, monomer. Zn(2+) is required as a cofactor.

The protein localises to the cytoplasm. The enzyme catalyses tRNA(Glu) + L-glutamate + ATP = L-glutamyl-tRNA(Glu) + AMP + diphosphate. In terms of biological role, catalyzes the attachment of glutamate to tRNA(Glu) in a two-step reaction: glutamate is first activated by ATP to form Glu-AMP and then transferred to the acceptor end of tRNA(Glu). In Shewanella putrefaciens (strain CN-32 / ATCC BAA-453), this protein is Glutamate--tRNA ligase.